The primary structure comprises 58 residues: DNA-directed RNA polymerases I, II, and III subunit RPABC4 (58 aa).

4 residues coordinate Zn(2+): C19, C22, C36, and C39. The segment at C19–C39 adopts a C4-type zinc-finger fold.

Belongs to the archaeal Rpo12/eukaryotic RPC10 RNA polymerase subunit family. In terms of assembly, component of the RNA polymerase I (Pol I), RNA polymerase II (Pol II) and RNA polymerase III (Pol III) complexes consisting of at least 13, 12 and 17 subunits, respectively. Pol I complex consists of a ten-subunit catalytic core composed of POLR1A/RPA1, POLR1B/RPA2, POLR1C/RPAC1, POLR1D/RPAC2, POLR1H/RPA12, POLR2E/RPABC1, POLR2F/RPABC2, POLR2H/RPABC3, POLR2K/RPABC4 and POLR2L/RPABC5; a mobile stalk subunit POLR1F/RPA43 protruding from the core and additional subunits homologous to general transcription factors POLR1E/RPA49 and POLR1G/RPA34. Part of Pol I pre-initiation complex (PIC), in which Pol I core assembles with RRN3 and promoter-bound UTBF and SL1/TIF-IB complex. Pol II complex contains a ten-subunit catalytic core composed of POLR2A/RPB1, POLR2B/RPB2, POLR2C/RPB3, POLR2I/RPB9, POLR2J/RPB11, POLR2E/RPABC1, POLR2F/RPABC2, POLR2H/RPABC3, POLR2K/RPABC4 and POLR2L/RPABC5 and a mobile stalk composed of two subunits POLR2D/RPB4 and POLR2G/RPB7. Part of Pol II(G) complex, in which Pol II core associates with an additional subunit POLR2M; unlike conventional Pol II, Pol II(G) functions as a transcriptional repressor. Part of TBP-based Pol II pre-initiation complex (PIC), in which Pol II core assembles with general transcription factors and other specific initiation factors including GTF2E1, GTF2E2, GTF2F1, GTF2F2, TCEA1, ERCC2, ERCC3, GTF2H2, GTF2H3, GTF2H4, GTF2H5, GTF2A1, GTF2A2, GTF2B and TBP; this large multi-subunit PIC complex mediates DNA unwinding and targets Pol II core to the transcription start site where the first phosphodiester bond forms. Pol III complex consists of a ten-subunit catalytic core composed of POLR3A/RPC1, POLR3B/RPC2, POLR1C/RPAC1, POLR1D/RPAC2, POLR3K/RPC10, POLR2E/RPABC1, POLR2F/RPABC2, POLR2H/RPABC3, POLR2K/RPABC4 and POLR2L/RPABC5; a mobile stalk composed of two subunits POLR3H/RPC8 and CRCP/RPC9, protruding from the core and functioning primarily in transcription initiation; and additional subunits homologous to general transcription factors of the RNA polymerase II machinery, POLR3C/RPC3-POLR3F/RPC6-POLR3G/RPC7 heterotrimer required for transcription initiation and POLR3D/RPC4-POLR3E/RPC5 heterodimer involved in both transcription initiation and termination.

It localises to the nucleus. Its subcellular location is the nucleolus. Its function is as follows. DNA-dependent RNA polymerase catalyzes the transcription of DNA into RNA using the four ribonucleoside triphosphates as substrates. Common component of RNA polymerases I, II and III which synthesize ribosomal RNA precursors, mRNA precursors and many functional non-coding RNAs, and a small RNAs, such as 5S rRNA and tRNAs, respectively. In Bos taurus (Bovine), this protein is DNA-directed RNA polymerases I, II, and III subunit RPABC4 (POLR2K).